The chain runs to 299 residues: Protein bem46 (299 aa).

Residues 15–32 traverse the membrane as a helical segment; sequence YSGMASLAVTLIALGFLY.

Belongs to the serine esterase family.

The protein localises to the membrane. Its function is as follows. Suppressor of bem1/bud5. This chain is Protein bem46 (bem46), found in Schizosaccharomyces pombe (strain 972 / ATCC 24843) (Fission yeast).